Reading from the N-terminus, the 607-residue chain is Elongation factor 4 (607 aa).

The tr-type G domain occupies 11–193; the sequence is KSIRNFSIIA…QIVAKVPAPT (183 aa). GTP contacts are provided by residues 23–28 and 140–143; these read DHGKST and NKID.

The protein belongs to the TRAFAC class translation factor GTPase superfamily. Classic translation factor GTPase family. LepA subfamily.

The protein localises to the cell membrane. It carries out the reaction GTP + H2O = GDP + phosphate + H(+). In terms of biological role, required for accurate and efficient protein synthesis under certain stress conditions. May act as a fidelity factor of the translation reaction, by catalyzing a one-codon backward translocation of tRNAs on improperly translocated ribosomes. Back-translocation proceeds from a post-translocation (POST) complex to a pre-translocation (PRE) complex, thus giving elongation factor G a second chance to translocate the tRNAs correctly. Binds to ribosomes in a GTP-dependent manner. This Exiguobacterium sibiricum (strain DSM 17290 / CCUG 55495 / CIP 109462 / JCM 13490 / 255-15) protein is Elongation factor 4.